Reading from the N-terminus, the 550-residue chain is MLRKQDPMKTAGWKKLSDHFQTMKDVHMRDLFAEDGDRFQRFSIRFGDILVDYSKNRLNQETLLLLLGLAEEVGLKDGVEAMFTGERINETEDRAVLHTALRNRSDAPVFVDGRDVMPEVNAVLKKMEEFSRRVISGRWKGYSGKPVRDIVNIGIGGSDLGPKMVAECLRPYAAKGLSVHFVSNVDGTHIVETLKLLDPETTLFMIASKTFTTQETMTNAHTARDWFLKHAGDPAHIARHFVALSTNTDRVKAFGIDPENMFVFWDWVGGRYSLWSAIGLSVACAIGFEGFLDLLQGAHEMDRHFREEPFERNIPVILALIGIWYNNFFGAESEAVLPYDQYMHRFPAYFQQGNMESNGKSADRGGGRVRHQTGPIIWGEPGTNGQHAFYQLIHQGTKLVPADFLAPALSHNDVGDHHAILLSNFFAQTEALMRGKNREEVIEELRREGRSEDAIQRLWPHKVFEGNKPTNSILFRKLTPRVLGSLIAMYEHKIFVQGVIWNIFSFDQWGVELGKQLAARILPELNDRTTVAAHDSSTNGLINAYKQMRG.

The active-site Proton donor is Glu356. Active-site residues include His387 and Lys515.

It belongs to the GPI family.

The protein localises to the cytoplasm. It carries out the reaction alpha-D-glucose 6-phosphate = beta-D-fructose 6-phosphate. The protein operates within carbohydrate biosynthesis; gluconeogenesis. It functions in the pathway carbohydrate degradation; glycolysis; D-glyceraldehyde 3-phosphate and glycerone phosphate from D-glucose: step 2/4. Its function is as follows. Catalyzes the reversible isomerization of glucose-6-phosphate to fructose-6-phosphate. The sequence is that of Glucose-6-phosphate isomerase from Syntrophobacter fumaroxidans (strain DSM 10017 / MPOB).